The chain runs to 215 residues: Beta-crystallin A3-1 (215 aa).

The interval 1–30 (MEIPVDQTEREDITSEKMAQINPLPVHLGP) is N-terminal arm. Beta/gamma crystallin 'Greek key' domains are found at residues 31-70 (WKIT…KVEC) and 71-117 (GAWI…RPIC). Residues 118 to 123 (SANHIE) are connecting peptide. Beta/gamma crystallin 'Greek key' domains follow at residues 124 to 165 (SKLV…KVQC) and 166 to 214 (GAWV…RRIQ).

It belongs to the beta/gamma-crystallin family. As to quaternary structure, homo/heterodimer, or complexes of higher-order. The structure of beta-crystallin oligomers seems to be stabilized through interactions between the N-terminal arms. In terms of processing, the N-terminus is blocked.

In terms of biological role, crystallins are the dominant structural components of the vertebrate eye lens. This is Beta-crystallin A3-1 from Aquarana catesbeiana (American bullfrog).